A 357-amino-acid polypeptide reads, in one-letter code: Phosphoribosylformylglycinamidine cyclo-ligase (357 aa).

The protein belongs to the AIR synthase family.

The protein resides in the cytoplasm. It carries out the reaction 2-formamido-N(1)-(5-O-phospho-beta-D-ribosyl)acetamidine + ATP = 5-amino-1-(5-phospho-beta-D-ribosyl)imidazole + ADP + phosphate + H(+). It functions in the pathway purine metabolism; IMP biosynthesis via de novo pathway; 5-amino-1-(5-phospho-D-ribosyl)imidazole from N(2)-formyl-N(1)-(5-phospho-D-ribosyl)glycinamide: step 2/2. This Agrobacterium fabrum (strain C58 / ATCC 33970) (Agrobacterium tumefaciens (strain C58)) protein is Phosphoribosylformylglycinamidine cyclo-ligase.